Consider the following 446-residue polypeptide: tRNA-2-methylthio-N(6)-dimethylallyladenosine synthase (446 aa).

The region spanning 6 to 122 (RRYHITTFGC…LGDLLQQVFD (117 aa)) is the MTTase N-terminal domain. Residues cysteine 15, cysteine 51, cysteine 85, cysteine 157, cysteine 161, and cysteine 164 each coordinate [4Fe-4S] cluster. The Radical SAM core domain maps to 143–380 (RDSNITAWVN…NHLVATKAAE (238 aa)). The TRAM domain maps to 383–446 (QRYLGRIEEI…RPFSLTGVIF (64 aa)).

It belongs to the methylthiotransferase family. MiaB subfamily. As to quaternary structure, monomer. It depends on [4Fe-4S] cluster as a cofactor.

Its subcellular location is the cytoplasm. It catalyses the reaction N(6)-dimethylallyladenosine(37) in tRNA + (sulfur carrier)-SH + AH2 + 2 S-adenosyl-L-methionine = 2-methylsulfanyl-N(6)-dimethylallyladenosine(37) in tRNA + (sulfur carrier)-H + 5'-deoxyadenosine + L-methionine + A + S-adenosyl-L-homocysteine + 2 H(+). Functionally, catalyzes the methylthiolation of N6-(dimethylallyl)adenosine (i(6)A), leading to the formation of 2-methylthio-N6-(dimethylallyl)adenosine (ms(2)i(6)A) at position 37 in tRNAs that read codons beginning with uridine. This is tRNA-2-methylthio-N(6)-dimethylallyladenosine synthase from Microcystis aeruginosa (strain NIES-843 / IAM M-2473).